The chain runs to 380 residues: MEQELNRLGVLAHSATDAQRKRLVENLRDLMISLETIDDTLERIVHTPFEIDGAKIGVNLGIFRTLTQSDASMDAETLAKMTGADPDLLVRLLRYFASARMIAEHGSDSFAANKVTRALASAKGESYVDVFYEMVLPTIHELPNFLERTHYRNPTDRYHLSFQDAFNWEGDLFTFFEADPHRQVLFNRHMQLQRSSITNWGTMATLLATNQSPDAVLLVDIGGGVGHQCERIRANCPNIQGRLILQDLPEVMKNALPIPGVEAMAHNVFEPQPIKGAKFYYLRGVLHDFPDDQCKEILRGIVGAMGVDSTLVIDEMILPDRNINWQATVMDLQMMANFGSQERTRSHWVRLIESTGLMLRDVLYHGLDEYQGLIIAVKTM.

S-adenosyl-L-methionine-binding positions include 222-223 (GG), D247, and R283. The active-site Proton acceptor is H287.

Belongs to the class I-like SAM-binding methyltransferase superfamily. Cation-independent O-methyltransferase family. COMT subfamily.

Its pathway is secondary metabolite biosynthesis. Nonribosomal peptide synthetase that mediates the biosynthesis of usterphenyllins and uscandidusins, p-terphenyl derivatives. Within the pathway, ucdC catalyzes O-methylation of the terphenyl triol intermediate produced by ucdB to yield terphenyllin carrying two methoxy moieties at C-9 and C-12. The pathway begin with the biosynthesis of 4-hydroxyphenylpyruvate (HPPA) from L-tyrosine, possibly by the aminotransferase ucdG. The nonribosomal peptide synthetase ucdA then condenses two HPPA units to produce atromentin. The key step in this pathway is the reduction and dehydration of atromentin to form a terphenyl triol intermediate, performed by the NAD-dependent dehydrogenase ucdB. Further O-methylation by the methyltransferase ucdC forms terphenyllin carrying two methoxy moieties at C-9 and C-12, and subsequent dihydroxylation at C-3 of ring A and C-15 of ring C by the flavin-dependent oxygenase ucdD leads to 3,15-dihydroxyterphenyllin. Prenylation by ucdE at position C-5 of ring A forms usterphenyllin B, and is followed by a second prenylation at position C-14 of ring C to form usterphenyllin A. The following furan ring formation that leads to uscandidusins A and B was proven to be an unexpected spontaneous non-enzymatic reaction. The protein is O-methyltransferase ucdC of Aspergillus ustus.